Consider the following 297-residue polypeptide: Inactive beta selinene synthase (297 aa).

Belongs to the terpene synthase family. Monomer.

It localises to the cytoplasm. Functionally, inactive selinene synthase. The chain is Inactive beta selinene synthase from Zea mays (Maize).